The following is a 427-amino-acid chain: Citrate synthase (427 aa).

Position 283 is an N6-acetyllysine (Lys-283). Residues His-306 and Asp-363 contribute to the active site.

This sequence belongs to the citrate synthase family. As to quaternary structure, homohexamer.

It carries out the reaction oxaloacetate + acetyl-CoA + H2O = citrate + CoA + H(+). It participates in carbohydrate metabolism; tricarboxylic acid cycle; isocitrate from oxaloacetate: step 1/2. This is Citrate synthase (gltA) from Escherichia coli O6:H1 (strain CFT073 / ATCC 700928 / UPEC).